We begin with the raw amino-acid sequence, 86 residues long: Large ribosomal subunit protein bL31B (86 aa).

The protein belongs to the bacterial ribosomal protein bL31 family. Type B subfamily. In terms of assembly, part of the 50S ribosomal subunit.

This chain is Large ribosomal subunit protein bL31B, found in Salmonella arizonae (strain ATCC BAA-731 / CDC346-86 / RSK2980).